Here is a 452-residue protein sequence, read N- to C-terminus: uncharacterized protein (452 aa).

The signal sequence occupies residues 1-20 (MQFFGSLFVSLLGAAGLANA). A disordered region spans residues 130–151 (TQSSSNSTSTMNSTGSVSGGSV).

It is found in the endoplasmic reticulum. This is an uncharacterized protein from Schizosaccharomyces pombe (strain 972 / ATCC 24843) (Fission yeast).